Consider the following 254-residue polypeptide: Thiazole synthase (254 aa).

K95 acts as the Schiff-base intermediate with DXP in catalysis. Residues G156, 182–183, and 204–205 each bind 1-deoxy-D-xylulose 5-phosphate; these read AG and NT.

This sequence belongs to the ThiG family. Homotetramer. Forms heterodimers with either ThiH or ThiS.

It is found in the cytoplasm. It catalyses the reaction [ThiS sulfur-carrier protein]-C-terminal-Gly-aminoethanethioate + 2-iminoacetate + 1-deoxy-D-xylulose 5-phosphate = [ThiS sulfur-carrier protein]-C-terminal Gly-Gly + 2-[(2R,5Z)-2-carboxy-4-methylthiazol-5(2H)-ylidene]ethyl phosphate + 2 H2O + H(+). It participates in cofactor biosynthesis; thiamine diphosphate biosynthesis. Functionally, catalyzes the rearrangement of 1-deoxy-D-xylulose 5-phosphate (DXP) to produce the thiazole phosphate moiety of thiamine. Sulfur is provided by the thiocarboxylate moiety of the carrier protein ThiS. In vitro, sulfur can be provided by H(2)S. The protein is Thiazole synthase of Vibrio atlanticus (strain LGP32) (Vibrio splendidus (strain Mel32)).